A 295-amino-acid chain; its full sequence is Pyridoxal 5'-phosphate synthase subunit PdxS (295 aa).

Asp-25 is a D-ribose 5-phosphate binding site. Residue Lys-82 is the Schiff-base intermediate with D-ribose 5-phosphate of the active site. Gly-154 contacts D-ribose 5-phosphate. Arg-166 is a binding site for D-glyceraldehyde 3-phosphate. D-ribose 5-phosphate contacts are provided by residues Gly-215 and 236-237 (GS).

It belongs to the PdxS/SNZ family. In the presence of PdxT, forms a dodecamer of heterodimers.

The enzyme catalyses aldehydo-D-ribose 5-phosphate + D-glyceraldehyde 3-phosphate + L-glutamine = pyridoxal 5'-phosphate + L-glutamate + phosphate + 3 H2O + H(+). The protein operates within cofactor biosynthesis; pyridoxal 5'-phosphate biosynthesis. Functionally, catalyzes the formation of pyridoxal 5'-phosphate from ribose 5-phosphate (RBP), glyceraldehyde 3-phosphate (G3P) and ammonia. The ammonia is provided by the PdxT subunit. Can also use ribulose 5-phosphate and dihydroxyacetone phosphate as substrates, resulting from enzyme-catalyzed isomerization of RBP and G3P, respectively. This Actinobacillus pleuropneumoniae serotype 5b (strain L20) protein is Pyridoxal 5'-phosphate synthase subunit PdxS.